The primary structure comprises 415 residues: Casein kinase I isoform delta (415 aa).

In terms of domain architecture, Protein kinase spans 9–277 (YRLGRKIGSG…YLRQLFRNLF (269 aa)). ATP is bound by residues 15–23 (IGSGSFGDI) and lysine 38. Aspartate 128 functions as the Proton acceptor in the catalytic mechanism. Residues 278–364 (HRQGFSYDYV…TSPRPVSGME (87 aa)) are centrosomal localization signal (CLS). Over residues 301–315 (ADDAERERRDREERL) the composition is skewed to basic and acidic residues. The segment at 301-415 (ADDAERERRD…SSGLQSVVHR (115 aa)) is disordered. The tract at residues 317-342 (HSRNPATRGLPSTASGRLRGTQEVAP) is autoinhibitory. Serine 328 and serine 331 each carry phosphoserine. Positions 347–358 (TPTSHTANTSPR) are enriched in polar residues. At serine 370 the chain carries Phosphoserine. Arginine 375 carries the post-translational modification Omega-N-methylarginine. Residues 380-400 (NISSSDLTGRQDTSRMSTSQI) show a composition bias toward polar residues. Phosphoserine is present on residues serine 382, serine 383, serine 384, serine 407, and serine 411.

This sequence belongs to the protein kinase superfamily. CK1 Ser/Thr protein kinase family. Casein kinase I subfamily. In terms of assembly, monomer. Component of the circadian core oscillator, which includes the CRY proteins, CLOCK, or NPAS2, ARTNL/BMAL1 or ARTNL2/BMAL2, CSNK1D and/or CSNK1E, TIMELESS and the PER proteins. Interacts with DNMT1 and MAP1A. Interacts directly with PER1 and PER2 which may lead to their degradation. Interacts with MAPT/TAU, SNAPIN, DBNDD2, AIB1/NCOA3 and ESR1. Interacts with AKAP9/AKAP450; this interaction promotes centrosomal subcellular location. Binds to tubulins in mitotic cells upon DNA damage. Interacts with GJA1. Interacts with DDX3X; this interaction enhances CSNK1D kinase activity in vitro, but it is unclear whether this interaction is physiologically relevant. Interacts with FAM83A, FAM83B, FAM83E and FAM83H (via DUF1669). Post-translationally, autophosphorylated on serine and threonine residues; this autophosphorylation represses activity. Reactivated by phosphatase-mediated dephosphorylation. May be dephosphorylated by PP1.

It is found in the cytoplasm. It localises to the nucleus. The protein localises to the cytoskeleton. Its subcellular location is the microtubule organizing center. The protein resides in the centrosome. It is found in the perinuclear region. It localises to the cell membrane. The protein localises to the spindle. Its subcellular location is the golgi apparatus. It carries out the reaction L-seryl-[protein] + ATP = O-phospho-L-seryl-[protein] + ADP + H(+). It catalyses the reaction L-threonyl-[protein] + ATP = O-phospho-L-threonyl-[protein] + ADP + H(+). The enzyme catalyses L-seryl-[tau protein] + ATP = O-phospho-L-seryl-[tau protein] + ADP + H(+). The catalysed reaction is L-threonyl-[tau protein] + ATP = O-phospho-L-threonyl-[tau protein] + ADP + H(+). Exhibits substrate-dependent heparin activation. Drug-mediated inhibition leads to a delay of the oscillations with the magnitude of this effect dependent upon the timing of drug administration. Inhibited by phosphorylation. In terms of biological role, essential serine/threonine-protein kinase that regulates diverse cellular growth and survival processes including Wnt signaling, DNA repair and circadian rhythms. It can phosphorylate a large number of proteins. Casein kinases are operationally defined by their preferential utilization of acidic proteins such as caseins as substrates. Phosphorylates connexin-43/GJA1, MAP1A, SNAPIN, MAPT/TAU, TOP2A, DCK, HIF1A, EIF6, p53/TP53, DVL2, DVL3, ESR1, AIB1/NCOA3, DNMT1, PKD2, YAP1, PER1 and PER2. Central component of the circadian clock. In balance with PP1, determines the circadian period length through the regulation of the speed and rhythmicity of PER1 and PER2 phosphorylation. Controls PER1 and PER2 nuclear transport and degradation. YAP1 phosphorylation promotes its SCF(beta-TRCP) E3 ubiquitin ligase-mediated ubiquitination and subsequent degradation. DNMT1 phosphorylation reduces its DNA-binding activity. Phosphorylation of ESR1 and AIB1/NCOA3 stimulates their activity and coactivation. Phosphorylation of DVL2 and DVL3 regulates WNT3A signaling pathway that controls neurite outgrowth. Phosphorylates NEDD9/HEF1. EIF6 phosphorylation promotes its nuclear export. Triggers down-regulation of dopamine receptors in the forebrain. Activates DCK in vitro by phosphorylation. TOP2A phosphorylation favors DNA cleavable complex formation. May regulate the formation of the mitotic spindle apparatus in extravillous trophoblast. Modulates connexin-43/GJA1 gap junction assembly by phosphorylation. Probably involved in lymphocyte physiology. Regulates fast synaptic transmission mediated by glutamate. The chain is Casein kinase I isoform delta (CSNK1D) from Pongo abelii (Sumatran orangutan).